Consider the following 168-residue polypeptide: Large ribosomal subunit protein uL24 (168 aa).

Positions 112–168 (LEGKDPRKQPKEAPKAAEKPAKEEPKKETPKAEEKPAKEEPKETKVEKKSEEKEDEN) are disordered.

It belongs to the universal ribosomal protein uL24 family. As to quaternary structure, part of the 50S ribosomal subunit.

One of two assembly initiator proteins, it binds directly to the 5'-end of the 23S rRNA, where it nucleates assembly of the 50S subunit. Functionally, located at the polypeptide exit tunnel on the outside of the subunit. This is Large ribosomal subunit protein uL24 from Nitrosopumilus maritimus (strain SCM1).